The following is a 372-amino-acid chain: Glutamate 5-kinase (372 aa).

Lysine 14 serves as a coordination point for ATP. The substrate site is built by serine 54, aspartate 141, and asparagine 153. Residues 173–174 (TD) and 215–221 (TGGMLTK) contribute to the ATP site. Residues 280–358 (AGRLVLDDGA…RDIERLLGYV (79 aa)) enclose the PUA domain.

Belongs to the glutamate 5-kinase family.

It is found in the cytoplasm. It catalyses the reaction L-glutamate + ATP = L-glutamyl 5-phosphate + ADP. Its pathway is amino-acid biosynthesis; L-proline biosynthesis; L-glutamate 5-semialdehyde from L-glutamate: step 1/2. In terms of biological role, catalyzes the transfer of a phosphate group to glutamate to form L-glutamate 5-phosphate. The polypeptide is Glutamate 5-kinase (Laribacter hongkongensis (strain HLHK9)).